Consider the following 108-residue polypeptide: Urease subunit beta (108 aa).

Belongs to the urease beta subunit family. In terms of assembly, heterotrimer of UreA (gamma), UreB (beta) and UreC (alpha) subunits. Three heterotrimers associate to form the active enzyme.

It is found in the cytoplasm. The enzyme catalyses urea + 2 H2O + H(+) = hydrogencarbonate + 2 NH4(+). The protein operates within nitrogen metabolism; urea degradation; CO(2) and NH(3) from urea (urease route): step 1/1. This is Urease subunit beta from Chromohalobacter salexigens (strain ATCC BAA-138 / DSM 3043 / CIP 106854 / NCIMB 13768 / 1H11).